We begin with the raw amino-acid sequence, 171 residues long: Small ribosomal subunit protein uS5 (171 aa).

Residues 15–78 (YEEKVVKIKR…EKAKKQLIRI (64 aa)) enclose the S5 DRBM domain.

Belongs to the universal ribosomal protein uS5 family. Part of the 30S ribosomal subunit. Contacts proteins S4 and S8.

Functionally, with S4 and S12 plays an important role in translational accuracy. In terms of biological role, located at the back of the 30S subunit body where it stabilizes the conformation of the head with respect to the body. In Phytoplasma australiense, this protein is Small ribosomal subunit protein uS5.